Here is a 334-residue protein sequence, read N- to C-terminus: Tetraacyldisaccharide 4'-kinase (334 aa).

60 to 67 lines the ATP pocket; it reads TVGGTGKT.

Belongs to the LpxK family.

The catalysed reaction is a lipid A disaccharide + ATP = a lipid IVA + ADP + H(+). Its pathway is glycolipid biosynthesis; lipid IV(A) biosynthesis; lipid IV(A) from (3R)-3-hydroxytetradecanoyl-[acyl-carrier-protein] and UDP-N-acetyl-alpha-D-glucosamine: step 6/6. In terms of biological role, transfers the gamma-phosphate of ATP to the 4'-position of a tetraacyldisaccharide 1-phosphate intermediate (termed DS-1-P) to form tetraacyldisaccharide 1,4'-bis-phosphate (lipid IVA). This is Tetraacyldisaccharide 4'-kinase from Stutzerimonas stutzeri (strain A1501) (Pseudomonas stutzeri).